Reading from the N-terminus, the 87-residue chain is Beta-mammal toxin Css4 (87 aa).

The first 19 residues, 1–19 (MNSLLMITACLALVGTVWA), serve as a signal peptide directing secretion. The LCN-type CS-alpha/beta domain occupies 20–85 (KEGYLVNSYT…VWPLPNKTCN (66 aa)). Disulfide bonds link cysteine 31-cysteine 84, cysteine 35-cysteine 60, cysteine 44-cysteine 65, and cysteine 48-cysteine 67. Asparagine 85 is subject to Asparagine amide.

Belongs to the long (4 C-C) scorpion toxin superfamily. Sodium channel inhibitor family. Beta subfamily. Expressed by the venom gland.

The protein resides in the secreted. Functionally, beta toxins bind voltage-independently at site-4 of sodium channels (Nav) and shift the voltage of activation toward more negative potentials thereby affecting sodium channel activation and promoting spontaneous and repetitive firing. This toxin is active only on mammals. This Centruroides suffusus (Durango bark scorpion) protein is Beta-mammal toxin Css4.